We begin with the raw amino-acid sequence, 213 residues long: Thymidylate kinase (213 aa).

10-17 (GLEGAGKT) provides a ligand contact to ATP.

Belongs to the thymidylate kinase family.

The catalysed reaction is dTMP + ATP = dTDP + ADP. Functionally, phosphorylation of dTMP to form dTDP in both de novo and salvage pathways of dTTP synthesis. The chain is Thymidylate kinase from Escherichia fergusonii (strain ATCC 35469 / DSM 13698 / CCUG 18766 / IAM 14443 / JCM 21226 / LMG 7866 / NBRC 102419 / NCTC 12128 / CDC 0568-73).